Consider the following 89-residue polypeptide: Protein FAM25A (89 aa).

It belongs to the FAM25 family.

The chain is Protein FAM25A from Homo sapiens (Human).